The sequence spans 620 residues: Cilia- and flagella-associated protein 52 (620 aa).

WD repeat units follow at residues 62–106 (GHSN…LMAR), 109–150 (LHKG…AICG), 156–195 (LNVG…RKIW), 203–242 (QMKR…LADT), 288–327 (QLQG…ETLV), 330–369 (CHFE…ELLR), 372–411 (VPNM…LMYV), 415–454 (AHRI…QKLE), 459–498 (EHKS…RNQM), 500–539 (LANT…GIRE), 543–582 (SLSG…VTHV), and 585–620 (GHSG…PFPS).

This sequence belongs to the CFAP52 family. Microtubule inner protein component of sperm flagellar doublet microtubules. Interacts with BRCA2. Interacts with the CCT chaperonin complex. Interacts with HSP70. Interacts with AK8. Interacts with CFAP45. Interacts with DNAI1. Interacts with IQDC. As to expression, expressed in respiratory cells and sperm (at protein level).

It is found in the cytoplasm. Its subcellular location is the cytoskeleton. The protein localises to the cilium axoneme. The protein resides in the flagellum axoneme. Its function is as follows. Microtubule inner protein (MIP) part of the dynein-decorated doublet microtubules (DMTs) in cilia axoneme. Important for proper ciliary and flagellar beating. May act in cooperation with CFAP45 and axonemal dynein subunit DNAH11. May play a role in cell growth and/or survival. This Sus scrofa (Pig) protein is Cilia- and flagella-associated protein 52 (CFAP52).